A 122-amino-acid chain; its full sequence is Large ribosomal subunit protein uL14 (122 aa).

The protein belongs to the universal ribosomal protein uL14 family. Part of the 50S ribosomal subunit. Forms a cluster with proteins L3 and L19. In the 70S ribosome, L14 and L19 interact and together make contacts with the 16S rRNA in bridges B5 and B8.

Functionally, binds to 23S rRNA. Forms part of two intersubunit bridges in the 70S ribosome. This Idiomarina loihiensis (strain ATCC BAA-735 / DSM 15497 / L2-TR) protein is Large ribosomal subunit protein uL14.